A 231-amino-acid polypeptide reads, in one-letter code: NADH-ubiquinone oxidoreductase chain 4 (231 aa).

A run of 7 helical transmembrane segments spans residues 1 to 21, 34 to 54, 63 to 85, 89 to 111, 128 to 148, 169 to 189, and 211 to 231; these read PIAGSMILAAILLKLGGYGII, VFLPFIVLALWGAILANLTCL, IAYSSISHMGLVVAAIIIQTPWG, AMALMIAHGFTSSALFCLANTTY, MMPMATTWWLMANLMNIAIPP, TIIMLGLSMLITASYSLHMFL, and LLMTLHLIPLLMISFKPELVT.

Belongs to the complex I subunit 4 family.

It localises to the mitochondrion membrane. The catalysed reaction is a ubiquinone + NADH + 5 H(+)(in) = a ubiquinol + NAD(+) + 4 H(+)(out). Functionally, core subunit of the mitochondrial membrane respiratory chain NADH dehydrogenase (Complex I) that is believed to belong to the minimal assembly required for catalysis. Complex I functions in the transfer of electrons from NADH to the respiratory chain. The immediate electron acceptor for the enzyme is believed to be ubiquinone. This is NADH-ubiquinone oxidoreductase chain 4 (MT-ND4) from Sistrurus miliarius (Pigmy rattlesnake).